A 179-amino-acid polypeptide reads, in one-letter code: Large ribosomal subunit protein uL6 (179 aa).

Belongs to the universal ribosomal protein uL6 family. In terms of assembly, part of the 50S ribosomal subunit.

This protein binds to the 23S rRNA, and is important in its secondary structure. It is located near the subunit interface in the base of the L7/L12 stalk, and near the tRNA binding site of the peptidyltransferase center. In Clostridium perfringens (strain ATCC 13124 / DSM 756 / JCM 1290 / NCIMB 6125 / NCTC 8237 / Type A), this protein is Large ribosomal subunit protein uL6.